A 213-amino-acid chain; its full sequence is Isomeliandiol synthase MOI2 (213 aa).

5 consecutive transmembrane segments (helical) span residues 18–38 (AALH…SWFI), 52–72 (VLCW…YYVF), 109–129 (IESM…YALA), 137–157 (ILQF…FLSA), and 171–191 (YWAY…LIAI). Residues 48–190 (MDRVVLCWWA…IWVIVPALIA (143 aa)) enclose the EXPERA domain.

The protein belongs to the EBP family. Mainly expressed in petioles.

It localises to the membrane. It carries out the reaction 7,8-epoxymelianol = isomeliandiol. Its pathway is secondary metabolite biosynthesis; terpenoid biosynthesis. Its function is as follows. Isomerase involved in the biosynthesis of limonoids triterpene natural products such as azadirachtin, an antifeedant widely used as bioinsecticide, and possessing many medicinal applications including anti-tumoral, anti-malarial, anti-rheumatic, antibacterial, anti-inflammatory, anti-pyretic and diuretic effects. Catalyzes the conversion of 7,8-epoxymelianol to isomeliandiol via skeletal rearrangements. The chain is Isomeliandiol synthase MOI2 from Melia azedarach (Chinaberry tree).